The sequence spans 645 residues: Cytochrome c oxidase subunit 1 (645 aa).

Residues 8-28 traverse the membrane as a helical segment; the sequence is LNYFYFSMWTGLSGAALATMI. Ca(2+) contacts are provided by Glu31 and Gly36. His54 provides a ligand contact to Fe(II)-heme a. 8 helical membrane passes run 56–76, 90–110, 247–267, 282–302, 337–357, 376–396, 410–430, and 438–458; these read LIMVFFVVVPIFFGGFANFLI, LNSIGFWIQPLGFLLVAKIAF, VLSVAVVLAGISTTISLLTLI, VLIPFITISLLLTLRLLAIVT, LFWFFGHPEVYILIIPSFGVA, IWAVYVMAYMGFVVWGHHMYL, ITIMICLPATIKLVNWTLTLA, and LVFLFFCSYVFFFLTGGFTGM. His343 contributes to the Cu cation binding site. Positions 343–347 form a cross-link, 1'-histidyl-3'-tyrosine (His-Tyr); the sequence is HPEVY. Residue Tyr347 participates in O2 binding. Cu cation is bound by residues His392 and His393. Positions 470 and 471 each coordinate Mg(2+). 3 helical membrane-spanning segments follow: residues 475-495, 513-533, and 555-575; these read VVAHFHLMLAGAAMMGAFTGL, FLHLVYYSAGIWTTFFPMFFL, and LASCGHFLTLAGVCFFFFGIF. His478 contributes to the heme a3 binding site. His480 lines the Fe(II)-heme a pocket.

The protein belongs to the heme-copper respiratory oxidase family. As to quaternary structure, component of the cytochrome c oxidase (complex IV, CIV), a multisubunit enzyme composed of a catalytic core of 3 subunits and several supernumerary subunits. The complex exists as a monomer or a dimer and forms supercomplexes (SCs) in the inner mitochondrial membrane with ubiquinol-cytochrome c oxidoreductase (cytochrome b-c1 complex, complex III, CIII). Heme serves as cofactor. Cu cation is required as a cofactor.

The protein localises to the mitochondrion inner membrane. The catalysed reaction is 4 Fe(II)-[cytochrome c] + O2 + 8 H(+)(in) = 4 Fe(III)-[cytochrome c] + 2 H2O + 4 H(+)(out). It functions in the pathway energy metabolism; oxidative phosphorylation. In terms of biological role, component of the cytochrome c oxidase, the last enzyme in the mitochondrial electron transport chain which drives oxidative phosphorylation. The respiratory chain contains 3 multisubunit complexes succinate dehydrogenase (complex II, CII), ubiquinol-cytochrome c oxidoreductase (cytochrome b-c1 complex, complex III, CIII) and cytochrome c oxidase (complex IV, CIV), that cooperate to transfer electrons derived from NADH and succinate to molecular oxygen, creating an electrochemical gradient over the inner membrane that drives transmembrane transport and the ATP synthase. Cytochrome c oxidase is the component of the respiratory chain that catalyzes the reduction of oxygen to water. Electrons originating from reduced cytochrome c in the intermembrane space (IMS) are transferred via the dinuclear copper A center (CU(A)) of subunit 2 and heme A of subunit 1 to the active site in subunit 1, a binuclear center (BNC) formed by heme A3 and copper B (CU(B)). The BNC reduces molecular oxygen to 2 water molecules using 4 electrons from cytochrome c in the IMS and 4 protons from the mitochondrial matrix. This is Cytochrome c oxidase subunit 1 (COI) from Paramecium tetraurelia.